Here is a 545-residue protein sequence, read N- to C-terminus: 2-oxo-Delta(3)-4,5,5-trimethylcyclopentenylacetyl-CoA monooxygenase (545 aa).

Residues Thr20, Glu39, 47 to 50 (TWYW), 59 to 60 (DT), Tyr65, and Val112 contribute to the FAD site. 57 to 59 (RLD) contacts NADP(+). Residues 193 to 199 (TGATGVQ) and 216 to 217 (RT) each bind NADP(+). Residue Val446 participates in FAD binding. NADP(+) is bound at residue Trp501.

This sequence belongs to the FAD-binding monooxygenase family. As to quaternary structure, homodimer. FAD serves as cofactor.

The enzyme catalyses [(1R)-2,2,3-trimethyl-5-oxocyclopent-3-enyl]acetyl-CoA + NADPH + O2 + H(+) = [(2R)-3,3,4-trimethyl-6-oxo-3,6-dihydro-1H-pyran-2-yl]acetyl-CoA + NADP(+) + H2O. Its pathway is terpene metabolism; (R)-camphor degradation. In terms of biological role, involved in the degradation of (+)-camphor. Catalyzes the lactonization of 2-oxo-delta(3)-4,5, 5-trimethylcyclopentenylacetyl-CoA (OT-CoA), a key intermediate in the metabolism of camphor. 2-Oxocyclopentyl ethyl acetate is also a good substrate, as is 2-oxocyclohexyl ethyl acetate and methyl-substituted cyclohexanones, but free acid is a poor substrate. The protein is 2-oxo-Delta(3)-4,5,5-trimethylcyclopentenylacetyl-CoA monooxygenase (otemo) of Pseudomonas putida (Arthrobacter siderocapsulatus).